A 398-amino-acid polypeptide reads, in one-letter code: Elongation factor Tu (398 aa).

The region spanning 10 to 207 (KPHVNIGTIG…TVDEYIPEPE (198 aa)) is the tr-type G domain. Residues 19 to 26 (GHVDHGKT) form a G1 region. 19–26 (GHVDHGKT) serves as a coordination point for GTP. T26 lines the Mg(2+) pocket. Residues 63–67 (GITIN) are G2. The tract at residues 84 to 87 (DAPG) is G3. GTP-binding positions include 84 to 88 (DAPGH) and 139 to 142 (NKVD). The G4 stretch occupies residues 139-142 (NKVD). A G5 region spans residues 177–179 (SAL).

The protein belongs to the TRAFAC class translation factor GTPase superfamily. Classic translation factor GTPase family. EF-Tu/EF-1A subfamily. Monomer.

The protein localises to the cytoplasm. It carries out the reaction GTP + H2O = GDP + phosphate + H(+). Functionally, GTP hydrolase that promotes the GTP-dependent binding of aminoacyl-tRNA to the A-site of ribosomes during protein biosynthesis. The chain is Elongation factor Tu from Streptococcus thermophilus (strain CNRZ 1066).